A 223-amino-acid polypeptide reads, in one-letter code: Translation initiation factor 6 (223 aa).

It belongs to the eIF-6 family.

Binds to the 50S ribosomal subunit and prevents its association with the 30S ribosomal subunit to form the 70S initiation complex. This Sulfurisphaera tokodaii (strain DSM 16993 / JCM 10545 / NBRC 100140 / 7) (Sulfolobus tokodaii) protein is Translation initiation factor 6.